Consider the following 189-residue polypeptide: GMP synthase [glutamine-hydrolyzing] subunit A (189 aa).

In terms of domain architecture, Glutamine amidotransferase type-1 spans 1–189 (MIVILNNGGQ…CKKCGFEFEE (189 aa)). The active-site Nucleophile is Cys-76. Active-site residues include His-163 and Glu-165.

As to quaternary structure, heterodimer composed of a glutamine amidotransferase subunit (A) and a GMP-binding subunit (B).

The catalysed reaction is XMP + L-glutamine + ATP + H2O = GMP + L-glutamate + AMP + diphosphate + 2 H(+). It participates in purine metabolism; GMP biosynthesis; GMP from XMP (L-Gln route): step 1/1. Its function is as follows. Catalyzes the synthesis of GMP from XMP. This chain is GMP synthase [glutamine-hydrolyzing] subunit A, found in Methanococcus maripaludis (strain C5 / ATCC BAA-1333).